A 135-amino-acid chain; its full sequence is Allatotropins (135 aa).

The signal sequence occupies residues 1–22 (MNFSMHLVLAVAAAACLCVVTA). Phenylalanine 51 carries the phenylalanine amide modification. Residues 55 to 135 (DRPHTRAELY…SSEELLRNVA (81 aa)) constitute a propeptide that is removed on maturation.

Allatotropin: Expressed in corpora cardiaca (CC), corpora allata (CA), antennal lobe (AL) and gnathal ganglion (GNG) (protein level). Expression in AL detected in all animals, expression in GNG detected in most animals and expression in CA and CC detected in few animals (at protein level). Allatotropin-PP-1: Expressed in corpora cardiaca (CC), corpora allata (CA), antennal lobe (AL) and gnathal ganglion (GNG) (at protein level). Expression in AL detected in all animals and expression in GNG, CA and CC detected in some animals (at protein level).

The protein localises to the secreted. Neuropeptide stimulator of juvenile hormone synthesis. The protein is Allatotropins of Agrotis ipsilon (Black cutworm moth).